The primary structure comprises 318 residues: 2-dehydro-3-deoxygalactonokinase (318 aa).

Substrate is bound by residues 35–39 (GAESN), Tyr-90, 105–107 (YDR), and Arg-169. Residues 167–169 (NYR), 228–233 (TRGEDG), and 257–260 (GTGD) each bind ATP. The substrate site is built by Asp-260 and Asp-296. Asp-260 (proton acceptor) is an active-site residue.

This sequence belongs to the carbohydrate kinase PfkB family. As to quaternary structure, homohexamer.

The catalysed reaction is 2-dehydro-3-deoxy-D-galactonate + ATP = 2-dehydro-3-deoxy-6-phospho-D-galactonate + ADP + H(+). Functionally, involved in galactose catabolism. Catalyzes the phosphorylation of 2-keto-3-deoxygalactonate (KDGal) to produce 2-keto-3-deoxy-6-phosphogalactonate (KDPGal). Can also phosphorylate 2-keto-3-deoxygluconate (KDG) to 2-keto-3-deoxy-6-phosphogluconate (KDPG), but the catalytic efficiency for KDGal is 50-fold higher than for KDG. This is 2-dehydro-3-deoxygalactonokinase from Haloferax volcanii (strain ATCC 29605 / DSM 3757 / JCM 8879 / NBRC 14742 / NCIMB 2012 / VKM B-1768 / DS2) (Halobacterium volcanii).